Consider the following 129-residue polypeptide: Snaclec coagulation factor IX/factor X-binding protein subunit B3 (129 aa).

The signal sequence occupies residues 1–8 (LSLSGTAA). 3 disulfides stabilise this stretch: Cys10-Cys21, Cys38-Cys127, and Cys104-Cys119. Residues 17–128 (YEGHCYKPFN…CRMMANFVCE (112 aa)) enclose the C-type lectin domain.

It belongs to the snaclec family. As to quaternary structure, heterodimer of subunits A and B3; disulfide-linked. In terms of tissue distribution, expressed by the venom gland.

Its subcellular location is the secreted. Functionally, anticoagulant protein which binds to the gamma-carboxyglutamic acid-domain regions of factors IX (F9) and factor X (F10) in the presence of calcium with a 1 to 1 stoichiometry. The protein is Snaclec coagulation factor IX/factor X-binding protein subunit B3 of Trimeresurus stejnegeri (Chinese green tree viper).